The sequence spans 434 residues: Beta-enolase (434 aa).

At A2 the chain carries N-acetylalanine. T72 bears the Phosphothreonine mark. Phosphoserine is present on residues S83 and S157. H158 and E167 together coordinate substrate. S176 carries the post-translational modification Phosphoserine. T205 is modified (phosphothreonine). Residue E210 is the Proton donor of the active site. Residue T229 is modified to Phosphothreonine. At Y236 the chain carries Phosphotyrosine. D245 is a Mg(2+) binding site. S263 carries the phosphoserine modification. Positions 293 and 318 each coordinate substrate. Mg(2+)-binding residues include E293 and D318. The Proton acceptor role is filled by K343. Substrate contacts are provided by residues 370-373 (SHRS) and K394.

It belongs to the enolase family. Mammalian enolase is composed of 3 isozyme subunits, alpha, beta and gamma, which can form homodimers or heterodimers which are cell-type and development-specific. Interacts with PNKD. Requires Mg(2+) as cofactor.

It is found in the cytoplasm. The catalysed reaction is (2R)-2-phosphoglycerate = phosphoenolpyruvate + H2O. It participates in carbohydrate degradation; glycolysis; pyruvate from D-glyceraldehyde 3-phosphate: step 4/5. Its function is as follows. Glycolytic enzyme that catalyzes the conversion of 2-phosphoglycerate to phosphoenolpyruvate. Appears to have a function in striated muscle development and regeneration. The polypeptide is Beta-enolase (ENO3) (Bos taurus (Bovine)).